The chain runs to 324 residues: CYFIP-related Rac1 interactor B (324 aa).

A lipid anchor (N-myristoyl glycine) is attached at glycine 2. Lysine 74 is covalently cross-linked (Glycyl lysine isopeptide (Lys-Gly) (interchain with G-Cter in ubiquitin)).

This sequence belongs to the CYRI family. In terms of assembly, interacts with RAC1 (GTP-bound form preferentially). In terms of processing, ubiquitinated at Lys-74 upon Salmonella bacterial infection. Expressed in pancreatic ducts (at protein level).

Its subcellular location is the membrane. The protein resides in the mitochondrion. In terms of biological role, negatively regulates RAC1 signaling and RAC1-driven cytoskeletal remodeling. Regulates chemotaxis, cell migration and epithelial polarization by controlling the polarity, plasticity, duration and extent of protrusions. Limits Rac1 mediated activation of the Scar/WAVE complex, focuses protrusion signals and regulates pseudopod complexity by inhibiting Scar/WAVE-induced actin polymerization. Protects against Salmonella bacterial infection. Attenuates processes such as macropinocytosis, phagocytosis and cell migration and restrict sopE-mediated bacterial entry. Also restricts infection mediated by Mycobacterium tuberculosis and Listeria monocytogenes. Involved in the regulation of mitochondrial dynamics and oxidative stress. This is CYFIP-related Rac1 interactor B (Cyrib) from Mus musculus (Mouse).